Reading from the N-terminus, the 505-residue chain is Cysteine--tRNA ligase (505 aa).

Residue Cys33 coordinates Zn(2+). The 'HIGH' region motif lies at 35 to 45 (PTVYDFAHIGN). Residues Cys229, His268, and Glu272 each contribute to the Zn(2+) site. The 'KMSKS' region motif lies at 301-305 (KMSKS). Lys304 provides a ligand contact to ATP.

This sequence belongs to the class-I aminoacyl-tRNA synthetase family. In terms of assembly, monomer. Requires Zn(2+) as cofactor.

The protein resides in the cytoplasm. The catalysed reaction is tRNA(Cys) + L-cysteine + ATP = L-cysteinyl-tRNA(Cys) + AMP + diphosphate. The sequence is that of Cysteine--tRNA ligase from Brucella anthropi (strain ATCC 49188 / DSM 6882 / CCUG 24695 / JCM 21032 / LMG 3331 / NBRC 15819 / NCTC 12168 / Alc 37) (Ochrobactrum anthropi).